A 91-amino-acid chain; its full sequence is PqqA binding protein (91 aa).

Belongs to the PqqD family. In terms of assembly, monomer. Interacts with PqqE.

It functions in the pathway cofactor biosynthesis; pyrroloquinoline quinone biosynthesis. Functions as a PqqA binding protein and presents PqqA to PqqE, in the pyrroloquinoline quinone (PQQ) biosynthetic pathway. The polypeptide is PqqA binding protein (Pseudomonas fluorescens (strain ATCC BAA-477 / NRRL B-23932 / Pf-5)).